The primary structure comprises 208 residues: Large ribosomal subunit protein bL25 (208 aa).

This sequence belongs to the bacterial ribosomal protein bL25 family. CTC subfamily. In terms of assembly, part of the 50S ribosomal subunit; part of the 5S rRNA/L5/L18/L25 subcomplex. Contacts the 5S rRNA. Binds to the 5S rRNA independently of L5 and L18.

In terms of biological role, this is one of the proteins that binds to the 5S RNA in the ribosome where it forms part of the central protuberance. The chain is Large ribosomal subunit protein bL25 from Syntrophotalea carbinolica (strain DSM 2380 / NBRC 103641 / GraBd1) (Pelobacter carbinolicus).